Consider the following 290-residue polypeptide: uncharacterized protein (290 aa).

The region spanning 2-238 (LKTENLSVGY…EIVNELYDLK (237 aa)) is the ABC transporter domain. Residue 34–41 (GPNGAGKS) participates in ATP binding.

Belongs to the ABC transporter superfamily.

This is an uncharacterized protein from Methanocaldococcus jannaschii (strain ATCC 43067 / DSM 2661 / JAL-1 / JCM 10045 / NBRC 100440) (Methanococcus jannaschii).